The sequence spans 488 residues: Transcriptional coactivator YAP1 (488 aa).

A compositionally biased stretch (pro residues) spans methionine 1–valine 21. A disordered region spans residues methionine 1 to glutamate 47. Serine 46 carries the phosphoserine modification. The residue at position 48 (threonine 48) is a Phosphothreonine. Residues methionine 71–glutamate 85 are a coiled coil. An N6-lactoyllysine modification is found at lysine 75. Residues leucine 76–threonine 99 are disordered. Phosphoserine occurs at positions 90 and 94. Threonine 95 is modified (phosphothreonine). At threonine 104 the chain carries Phosphothreonine; by MAPK8 and MAPK9. Residues serine 112, serine 113, serine 116, and serine 123 each carry the phosphoserine modification. Residue serine 149 is modified to Phosphoserine; by LATS1 and LATS2. 2 consecutive WW domains span residues valine 156–lysine 189 and glycine 215–leucine 248. 2 disordered regions span residues serine 261–leucine 293 and threonine 339–serine 393. Serine 274 is subject to Phosphoserine. Residues glutamine 276–leucine 488 form a transactivation domain region. A coiled-coil region spans residues glycine 283–glycine 344. Positions asparagine 348–tyrosine 376 are enriched in polar residues. Serine 352 bears the Phosphoserine; by MAPK8 and MAPK9 mark. A phosphoserine mark is found at serine 356, serine 366, serine 367, and serine 373. Position 382 is a phosphoserine; by LATS1 and LATS2 (serine 382). A compositionally biased stretch (polar residues) spans aspartate 384–serine 393. Phosphoserine; by CK1 occurs at positions 385 and 388. Tyrosine 392 bears the Phosphotyrosine; by ABL1 mark. Threonine 397 is subject to Phosphothreonine; by MAPK8 and MAPK9.

The protein belongs to the YAP1 family. As to quaternary structure, part of a complex when phosphorylated that contains DSG3, PKP1, YAP1 and YWHAG; the complex is required for localization of DSG3 and YAP1 to the cell membrane in keratinocytes. Binds to the SH3 domain of the YES kinase. Binds to WBP1 and WBP2. Binds, in vitro, through the WW1 domain, to neural isoforms of ENAH that contain the PPSY motif. The phosphorylated form interacts with YWHAB. Interacts (via WW domains) with LATS1 (via PPxY motif 2). Interacts with LATS2. Interacts (via WW domain 1) with isoform JM-A of ERBB4 (via PPxY motif 2). Interacts with TEAD1, TEAD2 and TEAD3. Interacts with TP73 and HCK. Interacts with RUNX1. Interacts with TEAD4. Interacts (via WW domains) with PTPN14 (via PPxY motif 2); this interaction leads to the cytoplasmic sequestration of YAP1 and inhibits its transcriptional coactivator activity. Interacts (when phosphorylated at Ser-112) with SMAD2, SMAD3 and WWTR1. Interacts with PRRG2 (via cytoplasmic domain). Interacts (via WW domains) with PRRG4 (via cytoplasmic domain). Interacts (phosphorylated) with CLDN18; the interaction sequesters YAP1 away from the nucleus and thereby restricts transcription of YAP1 target genes. Interacts with SMAD1. Interacts with AMOT; the interaction facilitates translocation of YAP1 to the cytoplasm and tight junctions. Interacts with AMOTL2, the interaction is required for ubiquitination of AMOTL2 and localization of YAP1 to tight junctions. In terms of processing, phosphorylated by LATS1 and LATS2; leading to cytoplasmic translocation and inactivation. Phosphorylated by ABL1; leading to YAP1 stabilization, enhanced interaction with TP73 and recruitment onto proapoptotic genes; in response to DNA damage. Phosphorylation at Ser-385 and Ser-388 by CK1 is triggered by previous phosphorylation at Ser-382 by LATS proteins and leads to YAP1 ubiquitination by SCF(beta-TRCP) E3 ubiquitin ligase and subsequent degradation. Phosphorylated at Thr-104, Ser-123, Ser-352 and Thr-397 by MAPK8/JNK1 and MAPK9/JNK2, which is required for the regulation of apoptosis by YAP1. Lactylation by AARS1 promotes nuclear localization and stabilization of YAP1, leading to increased Hippo signaling pathway. Delactylated by SIRT1. Post-translationally, ubiquitinated by SCF(beta-TRCP) E3 ubiquitin ligase. As to expression, isoforms lacking the transactivation domain seen in striatal neurons (at protein level). Ubiquitous. Isoform 2 is expressed at higher levels in the neural tissues. In the embryo, it is expressed in brain, eye, and the maxillary and frontonasal components of the primary palate.

Its subcellular location is the cytoplasm. It localises to the nucleus. The protein resides in the cell junction. The protein localises to the tight junction. It is found in the cell membrane. Functionally, transcriptional regulator with dual roles as a coactivator and corepressor. Critical downstream regulatory target in the Hippo signaling pathway, crucial for organ size control and tumor suppression by restricting proliferation and promoting apoptosis. The Hippo signaling pathway core involves a kinase cascade featuring STK3/MST2 and STK4/MST1, along with its regulatory partner SAV1, which phosphorylates and activates LATS1/2 in complex with their regulatory protein, MOB1. This activation leads to the phosphorylation and inactivation of the YAP1 oncoprotein and WWTR1/TAZ. Phosphorylation of YAP1 by LATS1/2 prevents its nuclear translocation, thereby regulating the expression of its target genes. The transcriptional regulation of gene expression requires TEAD transcription factors and modulates cell growth, anchorage-independent growth, and induction of epithelial-mesenchymal transition (EMT). Plays a key role in tissue tension and 3D tissue shape by regulating the cortical actomyosin network, acting via ARHGAP18, a Rho GTPase activating protein that suppresses F-actin polymerization. It also suppresses ciliogenesis by acting as a transcriptional corepressor of TEAD4 target genes AURKA and PLK1. In conjunction with WWTR1, regulates TGFB1-dependent SMAD2 and SMAD3 nuclear accumulation. Synergizes with WBP2 to enhance PGR activity. This is Transcriptional coactivator YAP1 (Yap1) from Mus musculus (Mouse).